The sequence spans 228 residues: Cytidylate kinase (228 aa).

10 to 18 (GPSGSGKGT) is a binding site for ATP.

Belongs to the cytidylate kinase family. Type 1 subfamily.

The protein resides in the cytoplasm. The enzyme catalyses CMP + ATP = CDP + ADP. The catalysed reaction is dCMP + ATP = dCDP + ADP. The polypeptide is Cytidylate kinase (Acinetobacter baumannii (strain AB0057)).